We begin with the raw amino-acid sequence, 304 residues long: Acetylglutamate kinase (304 aa).

Substrate contacts are provided by residues 70 to 71 (GG), Arg92, and Asn196.

It belongs to the acetylglutamate kinase family. ArgB subfamily.

It localises to the cytoplasm. It carries out the reaction N-acetyl-L-glutamate + ATP = N-acetyl-L-glutamyl 5-phosphate + ADP. Its pathway is amino-acid biosynthesis; L-arginine biosynthesis; N(2)-acetyl-L-ornithine from L-glutamate: step 2/4. Functionally, catalyzes the ATP-dependent phosphorylation of N-acetyl-L-glutamate. The chain is Acetylglutamate kinase from Methanococcoides burtonii (strain DSM 6242 / NBRC 107633 / OCM 468 / ACE-M).